The primary structure comprises 190 residues: Hypoxanthine/guanine phosphoribosyltransferase (190 aa).

Belongs to the purine/pyrimidine phosphoribosyltransferase family. Archaeal HPRT subfamily. Homodimer.

The protein localises to the cytoplasm. The enzyme catalyses IMP + diphosphate = hypoxanthine + 5-phospho-alpha-D-ribose 1-diphosphate. It catalyses the reaction GMP + diphosphate = guanine + 5-phospho-alpha-D-ribose 1-diphosphate. The protein operates within purine metabolism; IMP biosynthesis via salvage pathway; IMP from hypoxanthine: step 1/1. Functionally, catalyzes a salvage reaction resulting in the formation of IMP that is energically less costly than de novo synthesis. This is Hypoxanthine/guanine phosphoribosyltransferase from Methanothrix thermoacetophila (strain DSM 6194 / JCM 14653 / NBRC 101360 / PT) (Methanosaeta thermophila).